The sequence spans 159 residues: Serine-protein kinase RsbW (159 aa).

This sequence belongs to the anti-sigma-factor family.

It carries out the reaction L-seryl-[protein] + ATP = O-phospho-L-seryl-[protein] + ADP + H(+). The catalysed reaction is L-threonyl-[protein] + ATP = O-phospho-L-threonyl-[protein] + ADP + H(+). Functionally, negative regulator of sigma-B activity. Phosphorylates and inactivates its specific antagonist protein, RsbV. Upon phosphorylation of RsbV, RsbW is released and binds to sigma-B, thereby blocking its ability to form an RNA polymerase holoenzyme (E-sigma-B). This Staphylococcus aureus protein is Serine-protein kinase RsbW.